The primary structure comprises 148 residues: Ribose-5-P isomerase B (148 aa).

Residue 8-9 coordinates D-ribulose 5-phosphate; that stretch reads DE. C65 serves as the catalytic Proton acceptor. D-ribulose 5-phosphate-binding positions include 66-70, N99, R132, and K136; that span reads GTGIG.

It belongs to the LacAB/RpiB family.

The enzyme catalyses aldehydo-D-ribose 5-phosphate = D-ribulose 5-phosphate. The protein operates within carbohydrate degradation; pentose phosphate pathway; D-ribose 5-phosphate from D-ribulose 5-phosphate (non-oxidative stage): step 1/1. In terms of biological role, catalyzes the interconversion of ribulose-5-P and ribose-5-P. The polypeptide is Ribose-5-P isomerase B (Listeria innocua serovar 6a (strain ATCC BAA-680 / CLIP 11262)).